The following is a 536-amino-acid chain: Potassium voltage-gated channel protein shk-1 (536 aa).

Disordered regions lie at residues 1–31 and 87–131; these read MRFG…NKEK and AAEM…HPYT. At 1–275 the chain is on the cytoplasmic side; sequence MRFGGQRRCI…EYPDSSLSAR (275 aa). The span at 116 to 131 shows a compositional bias: polar residues; that stretch reads QRGTPDTSSTQGHPYT. A helical membrane pass occupies residues 276-296; it reads IIAFISIAVIALSIISFCWET. Residues 297-322 lie on the Extracellular side of the membrane; that stretch reads VPSDIEEKPINNSATAELLDEMDEKH. Residues 323–343 traverse the membrane as a helical segment; it reads YSPFFWIELMCILWFTIELIL. At 344-356 the chain is on the cytoplasmic side; it reads RFISCPCKVTFAT. The helical transmembrane segment at 357–377 threads the bilayer; it reads SVLNIIDFVAIAPFFVNFFFA. Over 378-425 the chain is Extracellular; sequence DTSKSNSSMSFAVLRVLRLVRVFRVFKLSRHSVGLQILGKTFRSSVQE. Residues 426-446 form a helical; Voltage-sensor membrane-spanning segment; sequence FCLLIFFMAIALVLFASGMYF. The Cytoplasmic segment spans residues 447–458; sequence AEQGEPNSKFTS. The helical transmembrane segment at 459-479 threads the bilayer; the sequence is IPASFWFVLVTMTTVGYGDLV. Residues 480–486 lie on the Extracellular side of the membrane; sequence PLSPFGK. Residues 487-507 traverse the membrane as a helical segment; the sequence is VVGGMCAMIGVLTLALPVPII. The Cytoplasmic portion of the chain corresponds to 508–536; sequence VANFKHFYRQENRLASMKSKGDDADDDIA.

It belongs to the potassium channel family. A (Shaker) (TC 1.A.1.2) subfamily. Shaker sub-subfamily. As to expression, expressed in a variety of interneurons and sensory neurons, as well as body wall muscle.

It is found in the membrane. Functionally, mediates the voltage-dependent potassium ion permeability of excitable membranes. Has an important role in repolarization and in regulating the pattern of action potential firing. Isoform a expresses currents in a more depolarized voltage range than isoform d. In Caenorhabditis elegans, this protein is Potassium voltage-gated channel protein shk-1.